Consider the following 333-residue polypeptide: MEKLTKIKHRIIPAKDSQNNSYKKVLKIKGLERGFGNTLAVALRRILLSNITGIAPFCVRIEGVEHEFTALEKVSEDIVTILSNLKKVVLNYDEDYVKDNQIIKLSLNANEDNRITSNHLTVTNAPRVEVQNKDVEIATLSKPGVLKLEMFLRAGRGYVDFEDNKKFIEEKEKELKELSSLSKGAFIAMDSVFSPVVNVAWKVTELNTASLKIEEQLELELETKLGVTPESAIKLACKILVAHFQTIGDLTDLDSDEIFQSEKQSLEKEEDDMEIRLLNLSMRSQNALAKSGIKTLNELASYPIEKLKEIKNLGEKSREEIIRKLNEYGKLKN.

Residues 1-251 (MEKLTKIKHR…AHFQTIGDLT (251 aa)) are alpha N-terminal domain (alpha-NTD). The segment at 272 to 333 (DMEIRLLNLS…KLNEYGKLKN (62 aa)) is alpha C-terminal domain (alpha-CTD).

The protein belongs to the RNA polymerase alpha chain family. Homodimer. The RNAP catalytic core consists of 2 alpha, 1 beta, 1 beta' and 1 omega subunit. When a sigma factor is associated with the core the holoenzyme is formed, which can initiate transcription.

It carries out the reaction RNA(n) + a ribonucleoside 5'-triphosphate = RNA(n+1) + diphosphate. In terms of biological role, DNA-dependent RNA polymerase catalyzes the transcription of DNA into RNA using the four ribonucleoside triphosphates as substrates. This chain is DNA-directed RNA polymerase subunit alpha, found in Mycoplasmopsis synoviae (strain 53) (Mycoplasma synoviae).